We begin with the raw amino-acid sequence, 266 residues long: UPF0354 protein Lm4b_01619 (266 aa).

It belongs to the UPF0354 family.

The chain is UPF0354 protein Lm4b_01619 from Listeria monocytogenes serotype 4b (strain CLIP80459).